Consider the following 188-residue polypeptide: GTP cyclohydrolase 1 (188 aa).

Residues Cys-73, His-76, and Cys-144 each coordinate Zn(2+).

The protein belongs to the GTP cyclohydrolase I family. In terms of assembly, homomer.

The catalysed reaction is GTP + H2O = 7,8-dihydroneopterin 3'-triphosphate + formate + H(+). It functions in the pathway cofactor biosynthesis; 7,8-dihydroneopterin triphosphate biosynthesis; 7,8-dihydroneopterin triphosphate from GTP: step 1/1. In Caldivirga maquilingensis (strain ATCC 700844 / DSM 13496 / JCM 10307 / IC-167), this protein is GTP cyclohydrolase 1.